A 108-amino-acid chain; its full sequence is Tetrahydromethanopterin S-methyltransferase subunit B (108 aa).

Residues 81–101 (FFGFWISLSILTLGLILVIGL) traverse the membrane as a helical segment.

This sequence belongs to the MtrB family. As to quaternary structure, the complex is composed of 8 subunits; MtrA, MtrB, MtrC, MtrD, MtrE, MtrF, MtrG and MtrH.

The protein localises to the cell membrane. It catalyses the reaction 5-methyl-5,6,7,8-tetrahydromethanopterin + coenzyme M + 2 Na(+)(in) = 5,6,7,8-tetrahydromethanopterin + methyl-coenzyme M + 2 Na(+)(out). It participates in one-carbon metabolism; methanogenesis from CO(2); methyl-coenzyme M from 5,10-methylene-5,6,7,8-tetrahydromethanopterin: step 2/2. Part of a complex that catalyzes the formation of methyl-coenzyme M and tetrahydromethanopterin from coenzyme M and methyl-tetrahydromethanopterin. This is an energy-conserving, sodium-ion translocating step. This chain is Tetrahydromethanopterin S-methyltransferase subunit B, found in Methanococcus aeolicus (strain ATCC BAA-1280 / DSM 17508 / OCM 812 / Nankai-3).